Reading from the N-terminus, the 486-residue chain is mRNA cap guanine-N(7) methyltransferase (486 aa).

Residues Met-1–Ala-92 are disordered. 3 stretches are compositionally biased toward basic and acidic residues: residues Glu-9–His-28, Val-35–Arg-54, and Glu-82–Ala-92. Residues Ser-135–Val-486 form the mRNA cap 0 methyltransferase domain. Asn-144–Asn-145 contributes to the mRNA binding site. S-adenosyl-L-methionine contacts are provided by residues Lys-148, Gly-177, Asp-201, Asp-247, Met-281–Cys-283, and Tyr-286. Basic and acidic residues predominate over residues Val-333 to Gly-351. The interval Val-333–Glu-365 is disordered. Residues Gly-352 to Glu-363 are compositionally biased toward acidic residues.

Belongs to the class I-like SAM-binding methyltransferase superfamily. mRNA cap 0 methyltransferase family.

The protein resides in the nucleus. It carries out the reaction a 5'-end (5'-triphosphoguanosine)-ribonucleoside in mRNA + S-adenosyl-L-methionine = a 5'-end (N(7)-methyl 5'-triphosphoguanosine)-ribonucleoside in mRNA + S-adenosyl-L-homocysteine. In terms of biological role, responsible for methylating the 5'-cap structure of mRNAs. This chain is mRNA cap guanine-N(7) methyltransferase (ABD1), found in Pyricularia oryzae (strain 70-15 / ATCC MYA-4617 / FGSC 8958) (Rice blast fungus).